The following is a 397-amino-acid chain: 1-deoxy-D-xylulose 5-phosphate reductoisomerase (397 aa).

NADPH contacts are provided by Ser-10, Gly-11, Ser-12, Ile-13, Ala-36, Arg-37, and Asn-124. Lys-125 is a 1-deoxy-D-xylulose 5-phosphate binding site. Glu-126 provides a ligand contact to NADPH. Residue Asp-150 participates in Mn(2+) binding. 1-deoxy-D-xylulose 5-phosphate contacts are provided by Ser-151, Glu-152, Ser-186, and His-209. Glu-152 lines the Mn(2+) pocket. Gly-215 lines the NADPH pocket. Residues Ser-222, Asn-227, Lys-228, and Glu-231 each contribute to the 1-deoxy-D-xylulose 5-phosphate site. Residue Glu-231 participates in Mn(2+) binding.

Belongs to the DXR family. Mg(2+) serves as cofactor. It depends on Mn(2+) as a cofactor.

It catalyses the reaction 2-C-methyl-D-erythritol 4-phosphate + NADP(+) = 1-deoxy-D-xylulose 5-phosphate + NADPH + H(+). The protein operates within isoprenoid biosynthesis; isopentenyl diphosphate biosynthesis via DXP pathway; isopentenyl diphosphate from 1-deoxy-D-xylulose 5-phosphate: step 1/6. In terms of biological role, catalyzes the NADPH-dependent rearrangement and reduction of 1-deoxy-D-xylulose-5-phosphate (DXP) to 2-C-methyl-D-erythritol 4-phosphate (MEP). This chain is 1-deoxy-D-xylulose 5-phosphate reductoisomerase, found in Aeromonas salmonicida (strain A449).